Here is a 310-residue protein sequence, read N- to C-terminus: Oxygen-dependent coproporphyrinogen-III oxidase (310 aa).

Residue S92 participates in substrate binding. The a divalent metal cation site is built by H96 and H106. H106 (proton donor) is an active-site residue. Substrate is bound at residue 108-110 (NVR). 2 residues coordinate a divalent metal cation: H145 and H175. The interval 240 to 275 (YVEFNLIWDRGTLFGLQSGGRTESILMSMPPLARWE) is important for dimerization. Position 258–260 (258–260 (GGR)) interacts with substrate.

This sequence belongs to the aerobic coproporphyrinogen-III oxidase family. As to quaternary structure, homodimer. Requires a divalent metal cation as cofactor.

The protein localises to the cytoplasm. It catalyses the reaction coproporphyrinogen III + O2 + 2 H(+) = protoporphyrinogen IX + 2 CO2 + 2 H2O. The protein operates within porphyrin-containing compound metabolism; protoporphyrin-IX biosynthesis; protoporphyrinogen-IX from coproporphyrinogen-III (O2 route): step 1/1. In terms of biological role, involved in the heme biosynthesis. Catalyzes the aerobic oxidative decarboxylation of propionate groups of rings A and B of coproporphyrinogen-III to yield the vinyl groups in protoporphyrinogen-IX. In Pectobacterium atrosepticum (strain SCRI 1043 / ATCC BAA-672) (Erwinia carotovora subsp. atroseptica), this protein is Oxygen-dependent coproporphyrinogen-III oxidase.